The sequence spans 57 residues: DNA gyrase inhibitor YacG (57 aa).

Residues Cys-10, Cys-13, Cys-25, and Cys-29 each coordinate Zn(2+).

This sequence belongs to the DNA gyrase inhibitor YacG family. Interacts with GyrB. Zn(2+) is required as a cofactor.

In terms of biological role, inhibits all the catalytic activities of DNA gyrase by preventing its interaction with DNA. Acts by binding directly to the C-terminal domain of GyrB, which probably disrupts DNA binding by the gyrase. This chain is DNA gyrase inhibitor YacG, found in Brucella melitensis biotype 1 (strain ATCC 23456 / CCUG 17765 / NCTC 10094 / 16M).